The following is a 364-amino-acid chain: Anhydro-N-acetylmuramic acid kinase (364 aa).

11–18 serves as a coordination point for ATP; that stretch reads GSSLDGID.

It belongs to the anhydro-N-acetylmuramic acid kinase family.

It carries out the reaction 1,6-anhydro-N-acetyl-beta-muramate + ATP + H2O = N-acetyl-D-muramate 6-phosphate + ADP + H(+). It participates in amino-sugar metabolism; 1,6-anhydro-N-acetylmuramate degradation. Its pathway is cell wall biogenesis; peptidoglycan recycling. In terms of biological role, catalyzes the specific phosphorylation of 1,6-anhydro-N-acetylmuramic acid (anhMurNAc) with the simultaneous cleavage of the 1,6-anhydro ring, generating MurNAc-6-P. Is required for the utilization of anhMurNAc either imported from the medium or derived from its own cell wall murein, and thus plays a role in cell wall recycling. The protein is Anhydro-N-acetylmuramic acid kinase of Pseudomonas savastanoi pv. phaseolicola (strain 1448A / Race 6) (Pseudomonas syringae pv. phaseolicola (strain 1448A / Race 6)).